An 874-amino-acid chain; its full sequence is Leucine--tRNA ligase (874 aa).

A 'HIGH' region motif is present at residues 43–53 (PYPSGRIHIGH). The 'KMSKS' region signature appears at 630 to 634 (KMSKS). ATP is bound at residue Lys-633.

Belongs to the class-I aminoacyl-tRNA synthetase family.

It localises to the cytoplasm. It catalyses the reaction tRNA(Leu) + L-leucine + ATP = L-leucyl-tRNA(Leu) + AMP + diphosphate. This is Leucine--tRNA ligase from Bradyrhizobium diazoefficiens (strain JCM 10833 / BCRC 13528 / IAM 13628 / NBRC 14792 / USDA 110).